A 157-amino-acid polypeptide reads, in one-letter code: S-ribosylhomocysteine lyase (157 aa).

Positions 54, 58, and 126 each coordinate Fe cation.

This sequence belongs to the LuxS family. In terms of assembly, homodimer. Requires Fe cation as cofactor.

The enzyme catalyses S-(5-deoxy-D-ribos-5-yl)-L-homocysteine = (S)-4,5-dihydroxypentane-2,3-dione + L-homocysteine. In terms of biological role, involved in the synthesis of autoinducer 2 (AI-2) which is secreted by bacteria and is used to communicate both the cell density and the metabolic potential of the environment. The regulation of gene expression in response to changes in cell density is called quorum sensing. Catalyzes the transformation of S-ribosylhomocysteine (RHC) to homocysteine (HC) and 4,5-dihydroxy-2,3-pentadione (DPD). The polypeptide is S-ribosylhomocysteine lyase (Bacillus cereus (strain G9842)).